The following is a 105-amino-acid chain: U-scoloptoxin(16)-Sm4a (105 aa).

The N-terminal stretch at 1 to 22 is a signal peptide; it reads MWALTVFVTILAAAIPITGVTG.

Belongs to the scoloptoxin-16 family. In terms of processing, contains 4 disulfide bonds. As to expression, expressed by the venom gland.

It is found in the secreted. The polypeptide is U-scoloptoxin(16)-Sm4a (Scolopendra morsitans (Tanzanian blue ringleg centipede)).